The following is a 239-amino-acid chain: L-cystine transport system permease protein TcyL (239 aa).

Residues 21 to 216 enclose the ABC transmembrane type-1 domain; that stretch reads LPVTLYILTL…AVAVLFEWFF (196 aa). Transmembrane regions (helical) follow at residues 25–45, 69–89, 96–116, and 196–216; these read LYIL…LALP, IMVQ…LIGI, PFYA…AEII, and EVYI…EWFF.

This sequence belongs to the binding-protein-dependent transport system permease family. As to quaternary structure, the complex is composed of two ATP-binding proteins (TcyN), two transmembrane proteins (TcyL and TcyM) and two solute-binding proteins (TcyJ and TcyK).

It is found in the cell membrane. In terms of biological role, part of the ABC transporter complex TcyJKLMN involved in L-cystine import. Probably responsible for the translocation of the substrate across the membrane. Is also involved in cystathionine, djenkolate, and S-methylcysteine transport. This is L-cystine transport system permease protein TcyL (tcyL) from Bacillus subtilis (strain 168).